Here is an 827-residue protein sequence, read N- to C-terminus: Rho GTPase-activating protein 6 (827 aa).

Residues 18–125 (TVYKSGPLFI…WKAALEQALA (108 aa)) form the PH domain. A Rho-GAP domain is found at 172–371 (LALEEIDGSP…ALLEDYGNMI (200 aa)). 2 disordered regions span residues 379–437 (CSTS…SDYA) and 517–561 (YTTS…SSGN). Positions 401–412 (IVVKHPDLHTLD) are enriched in basic and acidic residues. The segment covering 413 to 423 (IEEGETDDDND) has biased composition (acidic residues). Positions 517 to 543 (YTTSAEKPASKTTGSSTVNSKRSSSWG) are enriched in polar residues. The stretch at 560-684 (GNDELLIQRL…HQLSQQRQHH (125 aa)) forms a coiled coil.

Its function is as follows. Acts as a GTPase activator for the Rac-type GTPase by converting it to an inactive GDP-bound state. This Arabidopsis thaliana (Mouse-ear cress) protein is Rho GTPase-activating protein 6 (ROPGAP6).